Here is a 97-residue protein sequence, read N- to C-terminus: uncharacterized protein (97 aa).

To B.licheniformis xpaL1 and to B.subtilis XhlA.

This is an uncharacterized protein from Bacillus licheniformis.